Consider the following 365-residue polypeptide: Chorismate synthase (365 aa).

Arginine 46 contributes to the NADP(+) binding site. Residues 123–125 (RSS), 241–242 (NG), glycine 281, 296–300 (KPTPS), and arginine 322 contribute to the FMN site.

Belongs to the chorismate synthase family. In terms of assembly, homotetramer. FMNH2 is required as a cofactor.

The enzyme catalyses 5-O-(1-carboxyvinyl)-3-phosphoshikimate = chorismate + phosphate. Its pathway is metabolic intermediate biosynthesis; chorismate biosynthesis; chorismate from D-erythrose 4-phosphate and phosphoenolpyruvate: step 7/7. Catalyzes the anti-1,4-elimination of the C-3 phosphate and the C-6 proR hydrogen from 5-enolpyruvylshikimate-3-phosphate (EPSP) to yield chorismate, which is the branch point compound that serves as the starting substrate for the three terminal pathways of aromatic amino acid biosynthesis. This reaction introduces a second double bond into the aromatic ring system. The polypeptide is Chorismate synthase (Helicobacter pylori (strain HPAG1)).